Consider the following 141-residue polypeptide: UPF0179 protein Cmaq_1008 (141 aa).

Belongs to the UPF0179 family.

This Caldivirga maquilingensis (strain ATCC 700844 / DSM 13496 / JCM 10307 / IC-167) protein is UPF0179 protein Cmaq_1008.